The primary structure comprises 578 residues: Aspartate--tRNA ligase (578 aa).

E169 contributes to the L-aspartate binding site. The tract at residues Q191–K194 is aspartate. Position 213 (R213) interacts with L-aspartate. ATP contacts are provided by residues R213–E215 and Q222. An L-aspartate-binding site is contributed by H440. E474 provides a ligand contact to ATP. R481 provides a ligand contact to L-aspartate. Position 526-529 (G526–R529) interacts with ATP.

It belongs to the class-II aminoacyl-tRNA synthetase family. Type 1 subfamily. In terms of assembly, homodimer.

The protein localises to the cytoplasm. It carries out the reaction tRNA(Asp) + L-aspartate + ATP = L-aspartyl-tRNA(Asp) + AMP + diphosphate. Functionally, catalyzes the attachment of L-aspartate to tRNA(Asp) in a two-step reaction: L-aspartate is first activated by ATP to form Asp-AMP and then transferred to the acceptor end of tRNA(Asp). This Ureaplasma parvum serovar 3 (strain ATCC 700970) protein is Aspartate--tRNA ligase.